The chain runs to 335 residues: Beta-hexosaminidase (335 aa).

Substrate contacts are provided by residues Asp60, Arg68, Arg133, and 163-164 (KH). Catalysis depends on His176, which acts as the Proton donor/acceptor. The Nucleophile role is filled by Asp247.

It belongs to the glycosyl hydrolase 3 family. NagZ subfamily.

The protein resides in the cytoplasm. It carries out the reaction Hydrolysis of terminal non-reducing N-acetyl-D-hexosamine residues in N-acetyl-beta-D-hexosaminides.. It functions in the pathway cell wall biogenesis; peptidoglycan recycling. Its function is as follows. Plays a role in peptidoglycan recycling by cleaving the terminal beta-1,4-linked N-acetylglucosamine (GlcNAc) from peptide-linked peptidoglycan fragments, giving rise to free GlcNAc, anhydro-N-acetylmuramic acid and anhydro-N-acetylmuramic acid-linked peptides. This chain is Beta-hexosaminidase, found in Xylella fastidiosa (strain M12).